We begin with the raw amino-acid sequence, 653 residues long: Testicular spindle-associated protein SHCBP1L (653 aa).

The tract at residues 1-65 (MASGSKASVP…PVKGKAGRET (65 aa)) is disordered. S8 carries the phosphoserine modification. The segment covering 28–41 (SAVSGDTAAATTLK) has biased composition (polar residues). The segment covering 46-56 (PVRSVVASPRP) has biased composition (low complexity). Residue S53 is modified to Phosphoserine. Residues 299–326 (IAQRFKKTLEKYKNKRVELIEYQSNIKE) adopt a coiled-coil conformation. PbH1 repeat units lie at residues 493–514 (SGHM…CVLT), 515–537 (GAAL…ELYP), 538–571 (GSIA…NMKV), and 574–596 (APKL…SILQ). N6-acetyllysine is present on K570. K645 carries the post-translational modification N6-acetyllysine.

Interacts with HSPA2; this interaction may promote the recruitment of HSPA2 to the spindle. In terms of tissue distribution, expressed in spermatocytes and elongating spermatids inside the seminiferous tubules (at protein level). Testis-specific.

It is found in the cytoplasm. Its subcellular location is the cytoskeleton. It localises to the spindle. Functionally, testis-specific spindle-associated factor that plays a role in spermatogenesis. In association with HSPA2, participates in the maintenance of spindle integrity during meiosis in male germ cells. In Homo sapiens (Human), this protein is Testicular spindle-associated protein SHCBP1L.